Reading from the N-terminus, the 768-residue chain is MTIINSNLGYPRLGEHREWKHLLEHFWKGQLDNVTFHATAKKLRLANLKKQRDLGVDYIPVADNSDYDHVLDTLVAFNAIPSRFGHFDHQLDLPDYYAIARGTDTAVAAEMTKWFNINYHYIVPEFDDVSFKLLDNRWLRYYQEAKQELGIDGKPVILGPISFLKLGKRHGQYLDDAAVNELLPQLLPLYQQVFEELATAGAKWIQLDEPTLVKTTTVAELAPYQTALEHLHAAVPSLKIELQTYFDSLDQYDKIVTWPIQALGLDLVHDHGENLAHLVDHGFPTDKILAAGIIDGHNVWASDLQAKLALVQQLRQIVTDDQLWLQPANSLLHVPITTKNETKADPVLLGGLAFADQKLAELHTLTVAANQGVAAVQAVFDHNQANLTALNQSSHRNNQSVRAAEAQLSNQKFERQAPFATRIKLQHDRLHLPLLPTTTIGSFPQSAQVRAKRAAWRKGNLTDADYQAFLHAETKRWIKLQEDLGLDVLVHGEFERTDMVEYFGQKLTGFYATQNGWVQSYGSRGVRPPVIFGDVAYTEPITVAESVYAQSLTDQPVKGMLTAPLTIINWSFVRDDIPRAQVQNQIALALRQEVQNLEKAGIKIIQVDEPALREGLPLKQRHWQAYLDEAVYSFKITTTGVQNDTQIHTHMCYSNFADIINTIKALDADVISIETSRSHGEIISAFEQTGYDQEIGLGVYDIHSPRVPSVAEIEANIQRALRVIDARQFWINPDCGLKTRQESETLAALKNMIAARNAIQAQLTTSIH.

5-methyltetrahydropteroyltri-L-glutamate-binding positions include 17–20 (REWK) and Lys113. L-homocysteine contacts are provided by residues 440 to 442 (IGS) and Glu493. L-methionine-binding positions include 440–442 (IGS) and Glu493. Trp570 is a binding site for 5-methyltetrahydropteroyltri-L-glutamate. Residue Asp608 participates in L-homocysteine binding. Asp608 is an L-methionine binding site. 5-methyltetrahydropteroyltri-L-glutamate is bound at residue Glu614. Positions 650, 652, and 674 each coordinate Zn(2+). Residue His703 is the Proton donor of the active site. Position 735 (Cys735) interacts with Zn(2+).

It belongs to the vitamin-B12 independent methionine synthase family. The cofactor is Zn(2+).

The catalysed reaction is 5-methyltetrahydropteroyltri-L-glutamate + L-homocysteine = tetrahydropteroyltri-L-glutamate + L-methionine. It participates in amino-acid biosynthesis; L-methionine biosynthesis via de novo pathway; L-methionine from L-homocysteine (MetE route): step 1/1. Catalyzes the transfer of a methyl group from 5-methyltetrahydrofolate to homocysteine resulting in methionine formation. This is 5-methyltetrahydropteroyltriglutamate--homocysteine methyltransferase from Lactiplantibacillus plantarum (strain ATCC BAA-793 / NCIMB 8826 / WCFS1) (Lactobacillus plantarum).